Here is an 89-residue protein sequence, read N- to C-terminus: MEYQYPLDYDWSNEEMVTMVKFYEAIEKAYEKGIIREELMELYRRFKEIVPSKAEEKKIDKEFQEVSGYSIYRAIQRAKEIEEQKLVKM.

This sequence belongs to the UPF0223 family.

In Bacillus cereus (strain 03BB102), this protein is UPF0223 protein BCA_4066.